Consider the following 358-residue polypeptide: Putative glycylpeptide N-tetradecanoyltransferase (358 aa).

Belongs to the NMT family.

It carries out the reaction N-terminal glycyl-[protein] + tetradecanoyl-CoA = N-tetradecanoylglycyl-[protein] + CoA + H(+). Functionally, adds a myristoyl group to the N-terminal glycine residue of certain proteins. This chain is Putative glycylpeptide N-tetradecanoyltransferase, found in Acanthamoeba polyphaga (Amoeba).